The chain runs to 151 residues: 3-dehydroquinate dehydratase (151 aa).

The active-site Proton acceptor is the tyrosine 26. Residues asparagine 77, histidine 83, and aspartate 90 each coordinate substrate. Histidine 103 functions as the Proton donor in the catalytic mechanism. Substrate is bound by residues 104–105 and arginine 114; that span reads LS.

The protein belongs to the type-II 3-dehydroquinase family. In terms of assembly, homododecamer.

The enzyme catalyses 3-dehydroquinate = 3-dehydroshikimate + H2O. The protein operates within metabolic intermediate biosynthesis; chorismate biosynthesis; chorismate from D-erythrose 4-phosphate and phosphoenolpyruvate: step 3/7. Functionally, catalyzes a trans-dehydration via an enolate intermediate. The polypeptide is 3-dehydroquinate dehydratase (Pelodictyon phaeoclathratiforme (strain DSM 5477 / BU-1)).